The chain runs to 443 residues: Cyclic AMP receptor 4 (443 aa).

Residues 1-11 are Extracellular-facing; it reads MKVLQEINLTY. N-linked (GlcNAc...) asparagine glycosylation occurs at N8. A helical membrane pass occupies residues 12-32; the sequence is SILVIADFSSIFGCLLVLIAF. Residues 33–44 are Cytoplasmic-facing; it reads KKLKLLRNHITR. A helical membrane pass occupies residues 45-65; the sequence is VIACFCVSSLLKDIISTGLTL. Residues 66–89 are Extracellular-facing; it reads SLGPQNEAGSTSFQCYLYAITITY. The helical transmembrane segment at 90 to 110 threads the bilayer; that stretch reads GSLACWLWTLCLAFSIYNLIV. The Cytoplasmic portion of the chain corresponds to 111-119; that stretch reads KREPEPEKY. Residues 120 to 140 form a helical membrane-spanning segment; sequence EKFYHGVCWTIPLICVIVMLA. At 141–161 the chain is on the extracellular side; the sequence is KKTIEPVGNWCWISEKYVGYR. The chain crosses the membrane as a helical span at residues 162–182; it reads FGLFYGPFFAIWIISAVLVGL. At 183–208 the chain is on the cytoplasmic side; sequence TSRYTYSVIRNSVSDNKDKHMTYQFK. The helical transmembrane segment at 209-229 threads the bilayer; it reads LINYIIVFLLCWVFAIVNRIL. The Extracellular portion of the chain corresponds to 230 to 263; that stretch reads NGLGYYPTLPNILHTYFSVSHGFFASVTFIYNNP. Residues 264 to 284 form a helical membrane-spanning segment; it reads LMWRYWGSKIFLIFAKFGYFV. Topologically, residues 285 to 443 are cytoplasmic; that stretch reads ELQRRLDRNK…DEREKKDNKF (159 aa). 2 disordered regions span residues 325-354 and 396-443; these read NDIS…QQSP and SFEI…DNKF. The segment covering 332 to 352 has biased composition (low complexity); the sequence is QQQQQQQQTPQQPQQQFQQQQ. A compositionally biased stretch (polar residues) spans 396 to 410; sequence SFEITQPSNDLNTIE. Positions 411–425 are enriched in low complexity; sequence NNNNYNNNNNNNNNN. The segment covering 429-443 has biased composition (basic and acidic residues); sequence IEKEKDEREKKDNKF.

It belongs to the G-protein coupled receptor 5 family. In terms of processing, C-terminal Ser or Thr residues may be phosphorylated.

The protein localises to the membrane. Receptor for cAMP. Regulates axial patterning and cellular differentiation during late development. The activity of this receptor is mediated by G proteins. This chain is Cyclic AMP receptor 4 (carD), found in Dictyostelium discoideum (Social amoeba).